The primary structure comprises 275 residues: Transmembrane protein 202 (275 aa).

Transmembrane regions (helical) follow at residues 60 to 80, 116 to 136, 151 to 171, and 193 to 213; these read SGFSVLLLACTSPLNLVQFLV, ALFLISILFMLISLGLLLSSC, VSMLSFCSAVSLLLCLNLFLA, and WCSEVLYICVGIISFLNFITF.

Its subcellular location is the membrane. The sequence is that of Transmembrane protein 202 (Tmem202) from Mus musculus (Mouse).